The primary structure comprises 131 residues: Small ribosomal subunit protein uS8c (131 aa).

It belongs to the universal ribosomal protein uS8 family. In terms of assembly, part of the 30S ribosomal subunit.

The protein localises to the plastid. Its subcellular location is the chloroplast. Functionally, one of the primary rRNA binding proteins, it binds directly to 16S rRNA central domain where it helps coordinate assembly of the platform of the 30S subunit. The sequence is that of Small ribosomal subunit protein uS8c (rps8) from Phalaenopsis aphrodite subsp. formosana (Moth orchid).